The sequence spans 191 residues: Outer membrane lipoprotein DolP (191 aa).

The signal sequence occupies residues 1-18 (MKALSPIAVLISALLLQG). Residue Cys-19 is the site of N-palmitoyl cysteine attachment. Cys-19 is lipidated: S-diacylglycerol cysteine. 2 consecutive BON domains span residues 46-115 (DDGT…RQGQ) and 124-191 (NDTW…TFIK).

This sequence belongs to the lipoprotein DolP family.

Its subcellular location is the cell outer membrane. Functionally, plays an important role in maintaining outer membrane integrity. The chain is Outer membrane lipoprotein DolP from Escherichia coli O157:H7.